Consider the following 416-residue polypeptide: Lipid II:glycine glycyltransferase (416 aa).

This sequence belongs to the FemABX family.

Its subcellular location is the cytoplasm. It carries out the reaction beta-D-GlcNAc-(1-&gt;4)-Mur2Ac(oyl-L-Ala-D-isoglutaminyl-L-Lys-D-Ala-D-Ala)-di-trans,octa-cis-undecaprenyl diphosphate + glycyl-tRNA(Gly) = beta-D-GlcNAc-(1-&gt;4)-Mur2Ac(oyl-L-Ala-D-isoglutaminyl-L-Lys-(N(6)-Gly)-D-Ala-D-Ala)-di-trans,octa-cis-undecaprenyl diphosphate + tRNA(Gly) + H(+). Functionally, catalyzes the incorporation of amino acid(s) into the interchain peptide bridge of peptidoglycan, using aminoacyl-tRNA as amino acid donor. In Staphylococcus epidermidis (strain ATCC 35984 / DSM 28319 / BCRC 17069 / CCUG 31568 / BM 3577 / RP62A), this protein is Lipid II:glycine glycyltransferase (femX).